The primary structure comprises 377 residues: Uroporphyrinogen decarboxylase (377 aa).

Residues 40–44 (RQAGR), D89, Y169, S224, and H354 each bind substrate.

The protein belongs to the uroporphyrinogen decarboxylase family. Homodimer.

Its subcellular location is the cytoplasm. It carries out the reaction uroporphyrinogen III + 4 H(+) = coproporphyrinogen III + 4 CO2. It participates in porphyrin-containing compound metabolism; protoporphyrin-IX biosynthesis; coproporphyrinogen-III from 5-aminolevulinate: step 4/4. Functionally, catalyzes the decarboxylation of four acetate groups of uroporphyrinogen-III to yield coproporphyrinogen-III. In Leifsonia xyli subsp. xyli (strain CTCB07), this protein is Uroporphyrinogen decarboxylase.